The sequence spans 275 residues: Putative ribonuclease-like protein YfkH (275 aa).

6 consecutive transmembrane segments (helical) span residues 23–43 (LAYF…TLTA), 83–103 (LLSF…NAIV), 126–146 (IFLT…PVFG), 172–192 (WGVS…IAPN), 199–219 (FVMP…TLFS), and 235–255 (IGGI…IILG).

The protein localises to the cell membrane. In Bacillus subtilis (strain 168), this protein is Putative ribonuclease-like protein YfkH (yfkH).